A 121-amino-acid chain; its full sequence is Large ribosomal subunit protein uL18 (121 aa).

The protein belongs to the universal ribosomal protein uL18 family. In terms of assembly, part of the 50S ribosomal subunit; part of the 5S rRNA/L5/L18/L25 subcomplex. Contacts the 5S and 23S rRNAs.

Its function is as follows. This is one of the proteins that bind and probably mediate the attachment of the 5S RNA into the large ribosomal subunit, where it forms part of the central protuberance. The polypeptide is Large ribosomal subunit protein uL18 (Bordetella avium (strain 197N)).